The following is a 444-amino-acid chain: Probable D-serine dehydratase (444 aa).

Lys-118 is subject to N6-(pyridoxal phosphate)lysine.

Belongs to the serine/threonine dehydratase family. DsdA subfamily. Pyridoxal 5'-phosphate is required as a cofactor.

The enzyme catalyses D-serine = pyruvate + NH4(+). The chain is Probable D-serine dehydratase from Acinetobacter baumannii (strain ATCC 17978 / DSM 105126 / CIP 53.77 / LMG 1025 / NCDC KC755 / 5377).